The following is an 868-amino-acid chain: Receptor-like protein kinase At5g59670 (868 aa).

The signal sequence occupies residues 1–22 (MESSFGLLLALLTLTIIHIVQA). At 23-500 (QDPQGFISLD…PRLIKPPKKE (478 aa)) the chain is on the extracellular side. N-linked (GlcNAc...) asparagine glycans are attached at residues N38, N94, N141, N287, N300, N372, N405, N416, N423, N445, N464, and N471. LRR repeat units lie at residues 409 to 432 (PPRI…AIQS), 433 to 459 (ITQL…KMKS), and 461 to 481 (SVIN…LRKK). A helical transmembrane segment spans residues 501–521 (FPVAIVTLVVFVTVIVVLFLV). Residues 522-868 (FRKKMSTIVK…LDTTAVPMAR (347 aa)) lie on the Cytoplasmic side of the membrane. The residue at position 555 (T555) is a Phosphothreonine. In terms of domain architecture, Protein kinase spans 564–834 (KNFQRVLGKG…SMSQVIHELK (271 aa)). ATP is bound by residues 570–578 (LGKGGFGMV) and K592. Residue Y637 is modified to Phosphotyrosine. D689 acts as the Proton acceptor in catalysis. S723 is modified (phosphoserine). 2 positions are modified to phosphothreonine: T724 and T729.

Belongs to the protein kinase superfamily. Ser/Thr protein kinase family. Autophosphorylated on Tyr and Thr residues.

It localises to the cell membrane. It carries out the reaction L-seryl-[protein] + ATP = O-phospho-L-seryl-[protein] + ADP + H(+). The catalysed reaction is L-threonyl-[protein] + ATP = O-phospho-L-threonyl-[protein] + ADP + H(+). The enzyme catalyses L-tyrosyl-[protein] + ATP = O-phospho-L-tyrosyl-[protein] + ADP + H(+). Functionally, probable receptor with a dual specificity kinase activity acting on both serine/threonine- and tyrosine-containing substrates. The chain is Receptor-like protein kinase At5g59670 from Arabidopsis thaliana (Mouse-ear cress).